Consider the following 915-residue polypeptide: Pentatricopeptide repeat-containing protein At5g65560 (915 aa).

PPR repeat units lie at residues isoleucine 182 to proline 216, asparagine 217 to proline 251, aspartate 252 to arginine 286, asparagine 287 to proline 321, threonine 322 to proline 356, asparagine 357 to proline 391, asparagine 392 to proline 426, asparagine 427 to proline 460, aspartate 461 to proline 495, aspartate 496 to proline 530, asparagine 531 to proline 565, asparagine 566 to proline 600, threonine 601 to proline 635, aspartate 636 to proline 670, aspartate 671 to proline 705, lysine 724 to proline 758, asparagine 759 to proline 794, serine 795 to proline 829, glutamine 830 to glutamate 864, and aspartate 865 to phenylalanine 899.

The protein belongs to the PPR family. P subfamily.

This Arabidopsis thaliana (Mouse-ear cress) protein is Pentatricopeptide repeat-containing protein At5g65560.